We begin with the raw amino-acid sequence, 343 residues long: Anthranilate phosphoribosyltransferase (343 aa).

Residues G84, 87–88 (GD), T92, 94–97 (NIST), 112–120 (KHGNRGVSS), and S124 each bind 5-phospho-alpha-D-ribose 1-diphosphate. G84 is an anthranilate binding site. A Mg(2+)-binding site is contributed by S96. Residue N115 participates in anthranilate binding. R170 contributes to the anthranilate binding site. 2 residues coordinate Mg(2+): D229 and E230.

It belongs to the anthranilate phosphoribosyltransferase family. Homodimer. Mg(2+) serves as cofactor.

It carries out the reaction N-(5-phospho-beta-D-ribosyl)anthranilate + diphosphate = 5-phospho-alpha-D-ribose 1-diphosphate + anthranilate. Its pathway is amino-acid biosynthesis; L-tryptophan biosynthesis; L-tryptophan from chorismate: step 2/5. Its function is as follows. Catalyzes the transfer of the phosphoribosyl group of 5-phosphorylribose-1-pyrophosphate (PRPP) to anthranilate to yield N-(5'-phosphoribosyl)-anthranilate (PRA). This is Anthranilate phosphoribosyltransferase from Burkholderia orbicola (strain MC0-3).